The following is a 739-amino-acid chain: BEL1-like homeodomain protein 2 (739 aa).

Disordered regions lie at residues 23–73 (SQDY…ESSV) and 143–222 (LMNP…NSQT). A compositionally biased stretch (polar residues) spans 41 to 58 (NFSNGFDRSDSPNLTTQQ). The segment covering 145–155 (NPPPPQQPPSP) has biased composition (pro residues). Residues 179-190 (TNTTHHQNYTNH) show a composition bias toward low complexity. An SR/KY domain region spans residues 316–332 (SRYTTAAQELLEEFCSV). Residues 341–378 (KLGNSSNPNTCGGDGGGSSPSSAGANKEHPPLSASDRI) form a disordered region. The interval 376–447 (DRIEHQRRKV…CLKDAVAAQL (72 aa)) is BELL domain. A DNA-binding region (homeobox) is located at residues 498 to 560 (AWRPQRGLPE…NARVRLWKPM (63 aa)). The interval 567-627 (QESKEREREE…TAPDASDADA (61 aa)) is disordered. Acidic residues predominate over residues 576–585 (EELEENEEDQ). Positions 586 to 596 (ETKNSNDDKST) are enriched in basic and acidic residues. Over residues 597-627 (KSNNNESNFTAVRTTSQTPTTTAPDASDADA) the composition is skewed to low complexity.

This sequence belongs to the TALE/BELL homeobox family. May form heterodimeric complexes with TALE/KNOX proteins STM, KNAT1/BP, KNAT2 and KNAT5. Interacts with OFP1, OFP2, OFP4 and OFP5. Interacts with KNATM, isoform KNATM-B. Expressed in lateral organs.

It is found in the nucleus. Its function is as follows. Transcription factor that establishes leaf shape by repressing growth in specific subdomains of the leaf. Negatively regulates knox homeobox gene KNAT1/BP expression. This Arabidopsis thaliana (Mouse-ear cress) protein is BEL1-like homeodomain protein 2 (BLH2).